The sequence spans 110 residues: Protein SPIRAL1-like 2 (110 aa).

The tract at residues 28 to 110 (AVNKTPAETE…LDYLFGGGSN (83 aa)) is disordered. A compositionally biased stretch (low complexity) spans 40–52 (AHAPPTQAAAANA). Positions 63–82 (LNSNSANNYMRAEGQNTGNF) are enriched in polar residues. Ser67 bears the Phosphoserine mark. The segment covering 95 to 110 (PGGGSSLDYLFGGGSN) has biased composition (gly residues).

It belongs to the SPIRAL1 family. Ubiquitous.

In terms of biological role, acts redundantly with SPR1 in maintaining the cortical microtubules organization essential for anisotropic cell growth. The chain is Protein SPIRAL1-like 2 (SP1L2) from Arabidopsis thaliana (Mouse-ear cress).